We begin with the raw amino-acid sequence, 402 residues long: MSKLSLSSLDKTHLEGKKVLVRVDFNVPLNEDGQITDDTRIRAAIPTIEYLINHSAKVILAAHFGRPKGQVNEKMRLTPVAARLSELLGQNVALTNSCIGDEAVAQSNSLSNGDVLLLENVRFFGEEEKNDLEFAEKLASHADMYVNDAFGAAHRAHASTQGVTNYLSPSVAGFLLEKELKYLQGAVDSPNRPLAAIVGGSKVSSKIGVLDSLLDKCDKIMIGGGMIFTFYKARGLDVGKSLVEEDKLELAKDLEAKAKAKGVELLLPTDVVLADEFSPDANSKISQIDAISGNWMGLDIGPDSIKVFQNALAECKTIIWNGPMGVFEFDKFADGTNAIATTLADLSAFSEVCTIIGGGDSVAAVEKAGLAEKMSHISTGGGASLELLEGKTLPGVAALNDA.

Substrate contacts are provided by residues 24-26, arginine 40, 63-66, arginine 122, and arginine 155; these read DFN and HFGR. ATP contacts are provided by residues lysine 206, glycine 297, glutamate 328, and 358 to 361; that span reads GGDS.

The protein belongs to the phosphoglycerate kinase family. Monomer.

It is found in the cytoplasm. It catalyses the reaction (2R)-3-phosphoglycerate + ATP = (2R)-3-phospho-glyceroyl phosphate + ADP. The protein operates within carbohydrate degradation; glycolysis; pyruvate from D-glyceraldehyde 3-phosphate: step 2/5. This is Phosphoglycerate kinase from Prochlorococcus marinus (strain AS9601).